A 586-amino-acid chain; its full sequence is Phosphomethylpyrimidine synthase (586 aa).

2 disordered regions span residues 38 to 59 (IELS…TSGP) and 92 to 114 (GREI…VFPQ). Positions 92–102 (GREIKPEDDGV) are enriched in basic and acidic residues. Substrate-binding positions include Asn193, Met222, Tyr251, His287, 307–309 (SRG), 348–351 (DGLR), and Glu387. Position 391 (His391) interacts with Zn(2+). Tyr414 is a binding site for substrate. His455 contacts Zn(2+). Residues Cys535, Cys538, and Cys543 each contribute to the [4Fe-4S] cluster site.

This sequence belongs to the ThiC family. It depends on [4Fe-4S] cluster as a cofactor.

The catalysed reaction is 5-amino-1-(5-phospho-beta-D-ribosyl)imidazole + S-adenosyl-L-methionine = 4-amino-2-methyl-5-(phosphooxymethyl)pyrimidine + CO + 5'-deoxyadenosine + formate + L-methionine + 3 H(+). It functions in the pathway cofactor biosynthesis; thiamine diphosphate biosynthesis. In terms of biological role, catalyzes the synthesis of the hydroxymethylpyrimidine phosphate (HMP-P) moiety of thiamine from aminoimidazole ribotide (AIR) in a radical S-adenosyl-L-methionine (SAM)-dependent reaction. This Bacillus cytotoxicus (strain DSM 22905 / CIP 110041 / 391-98 / NVH 391-98) protein is Phosphomethylpyrimidine synthase.